A 240-amino-acid polypeptide reads, in one-letter code: E3 ubiquitin-protein ligase LubX (240 aa).

U-box domains follow at residues 30–103 (TTPT…QTNY) and 125–198 (EIPD…RKRE).

Post-translationally, ubiquitinated in the presence of host E1 ubiquitin-activating enzyme, E2 ubiquitin-conjugating enzyme and ubiquitin.

It localises to the secreted. The protein resides in the host cell. The enzyme catalyses S-ubiquitinyl-[E2 ubiquitin-conjugating enzyme]-L-cysteine + [acceptor protein]-L-lysine = [E2 ubiquitin-conjugating enzyme]-L-cysteine + N(6)-ubiquitinyl-[acceptor protein]-L-lysine.. In terms of biological role, effector proteins function to alter host cell physiology and promote bacterial survival in host tissues. This protein is an E3 ubiquitin ligase that interferes with host's ubiquitination pathway. This chain is E3 ubiquitin-protein ligase LubX (lubX), found in Legionella pneumophila (strain Paris).